A 199-amino-acid polypeptide reads, in one-letter code: Interferon kappa (199 aa).

The signal sequence occupies residues 1 to 21; sequence MTPKFLWLVALVALYIPPIQS. Disulfide bonds link Cys-24/Cys-119 and Cys-49/Cys-162.

It belongs to the alpha/beta interferon family. In terms of tissue distribution, expressed at low levels in peritoneal macrophages.

The protein localises to the secreted. In terms of biological role, may play a role in the regulation of immune cell function. The protein is Interferon kappa (Ifnk) of Mus musculus (Mouse).